The chain runs to 160 residues: Conopressin/conophysin, isoform 2 (160 aa).

The signal sequence occupies residues 1–30; it reads MKCSVLQMSRLSWAMCLMLLMLLLLGTAQG. Cys31 and Cys36 form a disulfide bridge. The residue at position 39 (Gly39) is a Glycine amide. Residues 40 to 47 constitute a propeptide that is removed on maturation; the sequence is GKRAVDAL. 7 disulfides stabilise this stretch: Cys53–Cys97, Cys56–Cys70, Cys64–Cys87, Cys71–Cys77, Cys104–Cys118, Cys112–Cys130, and Cys119–Cys124.

This sequence belongs to the vasopressin/oxytocin family. Expressed by the venom gland.

The protein localises to the secreted. Its function is as follows. Targets vasopressin-oxytocin related receptors. The protein is Conopressin/conophysin, isoform 2 of Conus monile (Necklace cone).